The chain runs to 166 residues: Large ribosomal subunit protein mL41 (166 aa).

Residues 1 to 26 (MNNCIKVVPIALRCQQRTISTSSVLE) constitute a mitochondrion transit peptide. The segment at 136–166 (KDGSAKEPSVNEQLTPEEALQRARKTGSDIF) is disordered.

It belongs to the mitochondrion-specific ribosomal protein mL41 family. Component of the mitochondrial ribosome large subunit (39S) which comprises a 16S rRNA and about 50 distinct proteins.

It is found in the mitochondrion. This Drosophila melanogaster (Fruit fly) protein is Large ribosomal subunit protein mL41 (mRpL41).